The primary structure comprises 375 residues: 23S rRNA (uracil(747)-C(5))-methyltransferase RlmC (375 aa).

The [4Fe-4S] cluster site is built by Cys3, Cys11, Cys14, and Cys87. The S-adenosyl-L-methionine site is built by Gln212, Phe241, Glu262, and Asn307. The active-site Nucleophile is the Cys334.

The protein belongs to the class I-like SAM-binding methyltransferase superfamily. RNA M5U methyltransferase family. RlmC subfamily.

It carries out the reaction uridine(747) in 23S rRNA + S-adenosyl-L-methionine = 5-methyluridine(747) in 23S rRNA + S-adenosyl-L-homocysteine + H(+). Catalyzes the formation of 5-methyl-uridine at position 747 (m5U747) in 23S rRNA. This is 23S rRNA (uracil(747)-C(5))-methyltransferase RlmC from Yersinia enterocolitica serotype O:8 / biotype 1B (strain NCTC 13174 / 8081).